Reading from the N-terminus, the 417-residue chain is Serine hydroxymethyltransferase (417 aa).

(6S)-5,6,7,8-tetrahydrofolate-binding positions include Leu116 and 120–122; that span reads GHL. Position 225 is an N6-(pyridoxal phosphate)lysine (Lys225).

Belongs to the SHMT family. In terms of assembly, homodimer. The cofactor is pyridoxal 5'-phosphate.

It localises to the cytoplasm. It catalyses the reaction (6R)-5,10-methylene-5,6,7,8-tetrahydrofolate + glycine + H2O = (6S)-5,6,7,8-tetrahydrofolate + L-serine. It functions in the pathway one-carbon metabolism; tetrahydrofolate interconversion. The protein operates within amino-acid biosynthesis; glycine biosynthesis; glycine from L-serine: step 1/1. Catalyzes the reversible interconversion of serine and glycine with tetrahydrofolate (THF) serving as the one-carbon carrier. This reaction serves as the major source of one-carbon groups required for the biosynthesis of purines, thymidylate, methionine, and other important biomolecules. Also exhibits THF-independent aldolase activity toward beta-hydroxyamino acids, producing glycine and aldehydes, via a retro-aldol mechanism. The polypeptide is Serine hydroxymethyltransferase (Hydrogenobaculum sp. (strain Y04AAS1)).